Consider the following 451-residue polypeptide: Eukaryotic translation initiation factor 3 subunit E (451 aa).

Positions 256–425 constitute a PCI domain; sequence TDLFFSPAYI…GTVIMNHPPQ (170 aa).

It belongs to the eIF-3 subunit E family. In terms of assembly, component of the eukaryotic translation initiation factor 3 (eIF-3) complex.

The protein localises to the cytoplasm. In terms of biological role, component of the eukaryotic translation initiation factor 3 (eIF-3) complex, which is involved in protein synthesis of a specialized repertoire of mRNAs and, together with other initiation factors, stimulates binding of mRNA and methionyl-tRNAi to the 40S ribosome. The eIF-3 complex specifically targets and initiates translation of a subset of mRNAs involved in cell proliferation. The sequence is that of Eukaryotic translation initiation factor 3 subunit E (int6) from Aspergillus fumigatus (strain CBS 144.89 / FGSC A1163 / CEA10) (Neosartorya fumigata).